We begin with the raw amino-acid sequence, 190 residues long: Somatotropin (190 aa).

An N-terminal signal peptide occupies residues 1–17 (MNRVILLLSVMCVGVSS). Disulfide bonds link cysteine 69–cysteine 163 and cysteine 180–cysteine 188.

It belongs to the somatotropin/prolactin family.

The protein localises to the secreted. Its function is as follows. Growth hormone plays an important role in growth control and is involved in the regulation of several anabolic processes. Implicated as an osmoregulatory substance important for seawater adaptation. In Paralichthys olivaceus (Bastard halibut), this protein is Somatotropin (gh).